The sequence spans 64 residues: DNA gyrase inhibitor YacG (64 aa).

4 residues coordinate Zn(2+): cysteine 6, cysteine 9, cysteine 25, and cysteine 29.

The protein belongs to the DNA gyrase inhibitor YacG family. Interacts with GyrB. Zn(2+) is required as a cofactor.

Its function is as follows. Inhibits all the catalytic activities of DNA gyrase by preventing its interaction with DNA. Acts by binding directly to the C-terminal domain of GyrB, which probably disrupts DNA binding by the gyrase. The protein is DNA gyrase inhibitor YacG of Haemophilus influenzae (strain ATCC 51907 / DSM 11121 / KW20 / Rd).